Consider the following 1898-residue polypeptide: Protein NYNRIN (1898 aa).

Disordered stretches follow at residues 289–315 (SNNQ…STNH), 424–450 (LPSA…CPRP), 467–533 (DVKD…TDQS), 618–691 (EPTT…TDAG), and 711–731 (VSLL…SGTL). Positions 618-627 (EPTTPKTPQA) are enriched in polar residues. Low complexity predominate over residues 649–672 (PAATVSKAPAASKAPAAPKVPVTP). Residues 792–942 (LRRVVIDGSS…LGRDGPTLDE (151 aa)) form the RNase NYN domain. The tract at residues 968 to 1019 (SASVTELSDDADSGPLESLPNMEEVREEKEERQDEEQRQGQGTQKAAEEDDL) is disordered. Residues 990-1005 (EEVREEKEERQDEEQR) are compositionally biased toward basic and acidic residues. An RNase H type-1 domain is found at 1304-1450 (LSTFVCIHMS…VDTLAKQGAQ (147 aa)). Transmembrane regions (helical) follow at residues 1372 to 1392 (VVFL…LPLW) and 1408 to 1428 (PSLL…PFIY). The Integrase catalytic domain occupies 1609–1774 (RSTAPWSNLQ…ESRLTEPLWW (166 aa)).

It is found in the membrane. In Homo sapiens (Human), this protein is Protein NYNRIN (NYNRIN).